Here is a 94-residue protein sequence, read N- to C-terminus: Large ribosomal subunit protein bL27 (94 aa).

A propeptide spanning residues 1-9 is cleaved from the precursor; sequence MLELNLQLF. The disordered stretch occupies residues 12-33; sequence KKGGGSTSNGRDSQAKRLGAKA.

The protein belongs to the bacterial ribosomal protein bL27 family. The N-terminus is cleaved by ribosomal processing cysteine protease Prp.

The sequence is that of Large ribosomal subunit protein bL27 from Lactococcus lactis subsp. lactis (strain IL1403) (Streptococcus lactis).